The primary structure comprises 323 residues: Ferrochelatase (323 aa).

Residues His195 and Glu276 each coordinate Fe cation.

This sequence belongs to the ferrochelatase family.

Its subcellular location is the cytoplasm. The catalysed reaction is heme b + 2 H(+) = protoporphyrin IX + Fe(2+). Its pathway is porphyrin-containing compound metabolism; protoheme biosynthesis; protoheme from protoporphyrin-IX: step 1/1. Its function is as follows. Catalyzes the ferrous insertion into protoporphyrin IX. The protein is Ferrochelatase of Mannheimia succiniciproducens (strain KCTC 0769BP / MBEL55E).